An 882-amino-acid chain; its full sequence is Homeobox-leucine zipper protein ROC3 (882 aa).

Positions 104–144 (DVDDDHKPQHSGHDQPPDAAQPSGAAGGNAKKKRYHRHTAH) are disordered. A compositionally biased stretch (basic and acidic residues) spans 107–119 (DDHKPQHSGHDQP). Residues 133–143 (AKKKRYHRHTA) are compositionally biased toward basic residues. The homeobox DNA-binding region spans 134-193 (KKKRYHRHTAHQIQQMEALFKECPHPDDKQRLKLSQELGLKPRQVKFWFQNRRTQMKAQQ). Residues 200–263 (ILRAENENLK…LDRLACIATR (64 aa)) adopt a coiled-coil conformation. In terms of domain architecture, START spans 340–584 (QEQDKQLVVD…LQRQCERLAS (245 aa)). Positions 782-816 (AAAPTISSSTTTTTGNGNGETSSTPPRNSSSNNNN) are enriched in low complexity. Positions 782 to 820 (AAAPTISSSTTTTTGNGNGETSSTPPRNSSSNNNNADEL) are disordered.

The protein belongs to the HD-ZIP homeobox family. Class IV subfamily.

Its subcellular location is the nucleus. Probable transcription factor. This Oryza sativa subsp. indica (Rice) protein is Homeobox-leucine zipper protein ROC3 (ROC3).